The sequence spans 831 residues: DNA helicase MCM8 (831 aa).

Over residues 1–20 (MSQGWRGGSGGWRGGGGGNP) the composition is skewed to gly residues. The interval 1 to 53 (MSQGWRGGSGGWRGGGGGNPYAGAWRGRPWRGRGQGGTWSRNNGRDPVCFAPP) is disordered. Residues 395 to 602 (LFQLIVNSLC…DHDHLLSEHV (208 aa)) enclose the MCM domain. Position 447–454 (447–454 (GDPGLGKS)) interacts with ATP.

Belongs to the MCM family. As to quaternary structure, component of the MCM8-MCM9 complex, which forms a hexamer composed of mcm8 and mcm9.

The protein localises to the nucleus. The catalysed reaction is ATP + H2O = ADP + phosphate + H(+). Its function is as follows. Component of the MCM8-MCM9 complex, a complex involved in homologous recombination repair following DNA interstrand cross-links and plays a key role during gametogenesis. The MCM8-MCM9 complex probably acts as a hexameric helicase required to process aberrant forks into homologous recombination substrates and to orchestrate homologous recombination with resection, fork stabilization and fork restart. In eggs, required for elongation during DNA replication by facilitating the recruitment of rpa2/rpa34 and stimulating the processivity of DNA polymerases at replication foci. Probably not required for DNA replication in other cells. The protein is DNA helicase MCM8 (mcm8) of Xenopus laevis (African clawed frog).